A 547-amino-acid chain; its full sequence is Phosphomethylpyrimidine synthase (547 aa).

Over residues 1–15 (MTETLSKTTEPSVTT) the composition is skewed to polar residues. Positions 1 to 36 (MTETLSKTTEPSVTTGPIPGSSKAYREVANPDGGPS) are disordered. Residues asparagine 150, methionine 179, tyrosine 208, histidine 244, 264 to 266 (SRG), 305 to 308 (DGLR), and glutamate 344 each bind substrate. Residue histidine 348 coordinates Zn(2+). Tyrosine 371 is a substrate binding site. Histidine 412 contacts Zn(2+). The [4Fe-4S] cluster site is built by cysteine 492, cysteine 495, and cysteine 500.

It belongs to the ThiC family. [4Fe-4S] cluster is required as a cofactor.

It catalyses the reaction 5-amino-1-(5-phospho-beta-D-ribosyl)imidazole + S-adenosyl-L-methionine = 4-amino-2-methyl-5-(phosphooxymethyl)pyrimidine + CO + 5'-deoxyadenosine + formate + L-methionine + 3 H(+). The protein operates within cofactor biosynthesis; thiamine diphosphate biosynthesis. In terms of biological role, catalyzes the synthesis of the hydroxymethylpyrimidine phosphate (HMP-P) moiety of thiamine from aminoimidazole ribotide (AIR) in a radical S-adenosyl-L-methionine (SAM)-dependent reaction. This chain is Phosphomethylpyrimidine synthase, found in Mycobacterium leprae (strain Br4923).